A 397-amino-acid chain; its full sequence is MAKAKFERTKPHVNIGTIGHVDHGKTTLTAAITKVLHDAIPDLNPFTPFDEIDKAPEERQRGITISIAHVEYQTESRHYAHVDCPGHADYIKNMITGAAQMDGAILVVAATDGPMPQTKEHVLLARQSGVPYIVVALNKADMVDDEEIMELVELEVRELLSEYEFDGDNCPVVQVSALKALEGDKEWGEKLLGLMKAVDENIPQPERDVDKPFLMPIEDVFTITGRGTVVTGRIERGVLKVNETVDIIGIKTEKTTTTVTGIEMFRKLLDEGQAGENVGLLLRGIKREDVERGQCIIKPGTVTPHTEFEATAYILSKDEGGRHTPFFNNYRPQFYFRTTDVTGVVTLKEGTEMVMPGDNAEMTVNLIQPVAMEEGLRFTIREGGRTVGAGQVVKINK.

Residues 10–206 (KPHVNIGTIG…AVDENIPQPE (197 aa)) form the tr-type G domain. A G1 region spans residues 19–26 (GHVDHGKT). Position 19-26 (19-26 (GHVDHGKT)) interacts with GTP. Threonine 26 provides a ligand contact to Mg(2+). A G2 region spans residues 62–66 (GITIS). Residues 83 to 86 (DCPG) are G3. Residues 83 to 87 (DCPGH) and 138 to 141 (NKAD) each bind GTP. The segment at 138-141 (NKAD) is G4. Residues 176–178 (SAL) are G5.

The protein belongs to the TRAFAC class translation factor GTPase superfamily. Classic translation factor GTPase family. EF-Tu/EF-1A subfamily. Monomer.

The protein resides in the cytoplasm. It carries out the reaction GTP + H2O = GDP + phosphate + H(+). Its function is as follows. GTP hydrolase that promotes the GTP-dependent binding of aminoacyl-tRNA to the A-site of ribosomes during protein biosynthesis. The polypeptide is Elongation factor Tu (Streptomyces cinnamoneus (Streptoverticillium cinnamoneum)).